We begin with the raw amino-acid sequence, 94 residues long: Large ribosomal subunit protein bL25 (94 aa).

This sequence belongs to the bacterial ribosomal protein bL25 family. In terms of assembly, part of the 50S ribosomal subunit; part of the 5S rRNA/L5/L18/L25 subcomplex. Contacts the 5S rRNA. Binds to the 5S rRNA independently of L5 and L18.

This is one of the proteins that binds to the 5S RNA in the ribosome where it forms part of the central protuberance. This is Large ribosomal subunit protein bL25 from Enterobacter sp. (strain 638).